The sequence spans 281 residues: Undecaprenyl-diphosphatase (281 aa).

The next 7 membrane-spanning stretches (helical) occupy residues 49-69 (SANT…AWIF), 92-112 (LHIF…DDFI), 116-136 (LFSV…MIAA), 152-172 (MTYK…WPGF), 196-216 (TFIM…ASNI), 224-244 (ILFY…SIRL), and 257-277 (FAIY…GFGI).

Belongs to the UppP family.

Its subcellular location is the cell membrane. The enzyme catalyses di-trans,octa-cis-undecaprenyl diphosphate + H2O = di-trans,octa-cis-undecaprenyl phosphate + phosphate + H(+). Catalyzes the dephosphorylation of undecaprenyl diphosphate (UPP). Confers resistance to bacitracin. The protein is Undecaprenyl-diphosphatase of Macrococcus caseolyticus (strain JCSC5402) (Macrococcoides caseolyticum).